We begin with the raw amino-acid sequence, 172 residues long: Trypsin inhibitor 1B (172 aa).

2 cysteine pairs are disulfide-bonded: Cys-40-Cys-84 and Cys-133-Cys-139.

Belongs to the protease inhibitor I3 (leguminous Kunitz-type inhibitor) family.

Functionally, WTI-1B inhibits trypsin stoichiometrically. This Psophocarpus tetragonolobus (Winged bean) protein is Trypsin inhibitor 1B.